The primary structure comprises 118 residues: Large ribosomal subunit protein bL19 (118 aa).

This sequence belongs to the bacterial ribosomal protein bL19 family.

In terms of biological role, this protein is located at the 30S-50S ribosomal subunit interface and may play a role in the structure and function of the aminoacyl-tRNA binding site. The chain is Large ribosomal subunit protein bL19 from Levilactobacillus brevis (strain ATCC 367 / BCRC 12310 / CIP 105137 / JCM 1170 / LMG 11437 / NCIMB 947 / NCTC 947) (Lactobacillus brevis).